A 340-amino-acid polypeptide reads, in one-letter code: GTP 3',8-cyclase (340 aa).

The Radical SAM core domain occupies Arg-20–Lys-246. A GTP-binding site is contributed by Arg-29. The [4Fe-4S] cluster site is built by Cys-36 and Cys-40. S-adenosyl-L-methionine is bound at residue Tyr-42. A [4Fe-4S] cluster-binding site is contributed by Cys-43. Arg-79 is a binding site for GTP. Gly-83 contacts S-adenosyl-L-methionine. Thr-110 lines the GTP pocket. Ser-134 is an S-adenosyl-L-methionine binding site. A GTP-binding site is contributed by Lys-171. Met-205 is an S-adenosyl-L-methionine binding site. Positions 268 and 271 each coordinate [4Fe-4S] cluster. Arg-273–Arg-275 is a GTP binding site. [4Fe-4S] cluster is bound at residue Cys-285.

The protein belongs to the radical SAM superfamily. MoaA family. In terms of assembly, monomer and homodimer. [4Fe-4S] cluster is required as a cofactor.

The catalysed reaction is GTP + AH2 + S-adenosyl-L-methionine = (8S)-3',8-cyclo-7,8-dihydroguanosine 5'-triphosphate + 5'-deoxyadenosine + L-methionine + A + H(+). It functions in the pathway cofactor biosynthesis; molybdopterin biosynthesis. Functionally, catalyzes the cyclization of GTP to (8S)-3',8-cyclo-7,8-dihydroguanosine 5'-triphosphate. This Actinobacillus pleuropneumoniae serotype 3 (strain JL03) protein is GTP 3',8-cyclase.